A 344-amino-acid chain; its full sequence is Biotin synthase (344 aa).

The 228-residue stretch at 40–267 (AEVQVSTLLS…KSMVRLSAGR (228 aa)) folds into the Radical SAM core domain. [4Fe-4S] cluster is bound by residues cysteine 55, cysteine 59, and cysteine 62. Residues cysteine 99, cysteine 130, cysteine 190, and arginine 262 each coordinate [2Fe-2S] cluster.

The protein belongs to the radical SAM superfamily. Biotin synthase family. In terms of assembly, homodimer. [4Fe-4S] cluster serves as cofactor. Requires [2Fe-2S] cluster as cofactor.

The catalysed reaction is (4R,5S)-dethiobiotin + (sulfur carrier)-SH + 2 reduced [2Fe-2S]-[ferredoxin] + 2 S-adenosyl-L-methionine = (sulfur carrier)-H + biotin + 2 5'-deoxyadenosine + 2 L-methionine + 2 oxidized [2Fe-2S]-[ferredoxin]. The protein operates within cofactor biosynthesis; biotin biosynthesis; biotin from 7,8-diaminononanoate: step 2/2. Its function is as follows. Catalyzes the conversion of dethiobiotin (DTB) to biotin by the insertion of a sulfur atom into dethiobiotin via a radical-based mechanism. In Xanthomonas campestris pv. campestris (strain 8004), this protein is Biotin synthase.